A 319-amino-acid chain; its full sequence is HPr kinase/phosphorylase (319 aa).

Active-site residues include histidine 137 and lysine 158. 152-159 (GDSGVGKS) contributes to the ATP binding site. A Mg(2+)-binding site is contributed by serine 159. Residue aspartate 176 is the Proton acceptor; for phosphorylation activity. Proton donor; for dephosphorylation activity of the active site. Residues 201–210 (MEIRGLGIIN) are important for the catalytic mechanism of both phosphorylation and dephosphorylation. Glutamate 202 provides a ligand contact to Mg(2+). Arginine 243 is a catalytic residue. The important for the catalytic mechanism of dephosphorylation stretch occupies residues 264 to 269 (PVRPGR).

This sequence belongs to the HPrK/P family. Homohexamer. Requires Mg(2+) as cofactor.

The enzyme catalyses [HPr protein]-L-serine + ATP = [HPr protein]-O-phospho-L-serine + ADP + H(+). The catalysed reaction is [HPr protein]-O-phospho-L-serine + phosphate + H(+) = [HPr protein]-L-serine + diphosphate. Its function is as follows. Catalyzes the ATP- as well as the pyrophosphate-dependent phosphorylation of a specific serine residue in HPr, a phosphocarrier protein of the phosphoenolpyruvate-dependent sugar phosphotransferase system (PTS). HprK/P also catalyzes the pyrophosphate-producing, inorganic phosphate-dependent dephosphorylation (phosphorolysis) of seryl-phosphorylated HPr (P-Ser-HPr). The chain is HPr kinase/phosphorylase from Treponema pallidum subsp. pallidum (strain SS14).